The sequence spans 105 residues: Thiosulfate sulfurtransferase GlpE (105 aa).

Residues 15 to 103 enclose the Rhodanese domain; the sequence is MQQGAILVDI…WCRAELPIDT (89 aa). The active-site Cysteine persulfide intermediate is cysteine 63.

The protein belongs to the GlpE family.

It is found in the cytoplasm. The enzyme catalyses thiosulfate + hydrogen cyanide = thiocyanate + sulfite + 2 H(+). It carries out the reaction thiosulfate + [thioredoxin]-dithiol = [thioredoxin]-disulfide + hydrogen sulfide + sulfite + 2 H(+). Transferase that catalyzes the transfer of sulfur from thiosulfate to thiophilic acceptors such as cyanide or dithiols. May function in a CysM-independent thiosulfate assimilation pathway by catalyzing the conversion of thiosulfate to sulfite, which can then be used for L-cysteine biosynthesis. In Haemophilus influenzae (strain 86-028NP), this protein is Thiosulfate sulfurtransferase GlpE.